Here is a 120-residue protein sequence, read N- to C-terminus: Large ribosomal subunit protein uL18 (120 aa).

The protein belongs to the universal ribosomal protein uL18 family. Part of the 50S ribosomal subunit; part of the 5S rRNA/L5/L18/L25 subcomplex. Contacts the 5S and 23S rRNAs.

Its function is as follows. This is one of the proteins that bind and probably mediate the attachment of the 5S RNA into the large ribosomal subunit, where it forms part of the central protuberance. In Finegoldia magna (strain ATCC 29328 / DSM 20472 / WAL 2508) (Peptostreptococcus magnus), this protein is Large ribosomal subunit protein uL18.